The primary structure comprises 343 residues: Putative KilA-N domain-containing protein R904 (343 aa).

Residues glutamate 51–tyrosine 157 form the KilA-N domain. The stretch at alanine 159 to tyrosine 279 forms a coiled coil.

The sequence is that of Putative KilA-N domain-containing protein R904 from Acanthamoeba polyphaga mimivirus (APMV).